The sequence spans 371 residues: DNA replication and repair protein RecF (371 aa).

30–37 contacts ATP; it reads GSNGQGKT.

It belongs to the RecF family.

Its subcellular location is the cytoplasm. In terms of biological role, the RecF protein is involved in DNA metabolism; it is required for DNA replication and normal SOS inducibility. RecF binds preferentially to single-stranded, linear DNA. It also seems to bind ATP. The protein is DNA replication and repair protein RecF of Acidothermus cellulolyticus (strain ATCC 43068 / DSM 8971 / 11B).